The primary structure comprises 575 residues: Epsin-1 (575 aa).

A 1,2-diacyl-sn-glycero-3-phospho-(1D-myo-inositol-4,5-bisphosphate) is bound by residues lysine 11, arginine 25, asparagine 30, arginine 63, and histidine 73. Positions 12-144 (NIVHNYSEAE…RDEDRLREER (133 aa)) constitute an ENTH domain. A disordered region spans residues 150–186 (TKEKLAQTATASSAAVGSGPPPEAEQAWPQSSGEEEL). The span at 157–167 (TATASSAAVGS) shows a compositional bias: low complexity. UIM domains follow at residues 183–202 (EEEL…ADQP), 208–227 (EDDV…HDKE), and 233–252 (GDDL…TGGK). The disordered stretch occupies residues 264 to 575 (FTTPAPPQAS…PAPNTNPFLL (312 aa)). 8 consecutive repeat copies span residues 274–276 (DPW), 294–296 (DPW), 306–308 (DPW), 319–321 (DPW), 332–334 (DPW), 349–351 (DPW), 367–369 (DPW), and 377–379 (DPW). Residues 274–379 (DPWGGPASVP…APAPAFSDPW (106 aa)) form an 8 X 3 AA repeats of D-P-W region. 2 stretches are compositionally biased toward low complexity: residues 279 to 299 (PASV…WGGP) and 306 to 316 (DPWGGAAPTPA). Low complexity predominate over residues 332-346 (DPWGGTPAPAAGEGP). Residues 367–379 (DPWAPAPAFSDPW) show a composition bias toward low complexity. Residue serine 382 is modified to Phosphoserine. The [DE]-X(1,2)-F-X-X-[FL]-X-X-X-R motif motif lies at 401–410 (DEFSDFDRLR). Phosphoserine is present on residues serine 418 and serine 419. Phosphothreonine is present on threonine 420. Phosphoserine occurs at positions 434, 446, and 453. Pro residues predominate over residues 453 to 467 (SPPPAATPTPTPPTR). 3 positions are modified to phosphothreonine: threonine 459, threonine 463, and threonine 469. The residue at position 472 (serine 472) is a Phosphoserine. Threonine 493 bears the Phosphothreonine mark. Tandem repeats lie at residues 501-503 (NPF) and 517-519 (NPF). The tract at residues 501–573 (NPFLPSGAPP…GPPAPNTNPF (73 aa)) is 3 X 3 AA repeats of N-P-F. At arginine 533 the chain carries Omega-N-methylarginine. The segment covering 556–569 (GLPPMMPPGPPAPN) has biased composition (pro residues). The stretch at 571–573 (NPF) is repeat 3.

It belongs to the epsin family. Monomer. Binds clathrin and ZBTB16/ZNF145. Binds ubiquitinated proteins. Interacts with RALBP1 in a complex also containing NUMB and TFAP2A during interphase and mitosis. Interacts with AP2B1. Interacts with UBQLN2. Interacts with ITSN1. Interacts with AP2A1 and AP2A2. Interacts with REPS2; the interaction is direct. Interacts with EPS15; the interaction is direct. Interacts with ENTREP1. Post-translationally, phosphorylated on serine and/or threonine residues in mitotic cells. Phosphorylation reduces interaction with REPS2, AP-2 and the membrane fraction. Depolarization of synaptosomes results in dephosphorylation. In terms of processing, ubiquitinated.

It localises to the cytoplasm. Its subcellular location is the cell membrane. The protein resides in the nucleus. It is found in the membrane. The protein localises to the clathrin-coated pit. Binds to membranes enriched in phosphatidylinositol 4,5-bisphosphate (PtdIns(4,5)P2). Modifies membrane curvature and facilitates the formation of clathrin-coated invaginations. Regulates receptor-mediated endocytosis. This Mus musculus (Mouse) protein is Epsin-1 (Epn1).